A 305-amino-acid chain; its full sequence is Probable xyloglucan endotransglucosylase/hydrolase protein 21 (305 aa).

Positions 1 to 25 (MVSSTLLVMSISLFLGLSILLVVHG) are cleaved as a signal peptide. Residues 26-216 (KDFNQDIDIT…WSQGPFVASF (191 aa)) enclose the GH16 domain. Residue Asn46 is glycosylated (N-linked (GlcNAc...) asparagine). Catalysis depends on Glu102, which acts as the Nucleophile. Residue Glu106 is the Proton donor of the active site. Xyloglucan is bound at residue Glu106. The N-linked (GlcNAc...) asparagine glycan is linked to Asn110. Xyloglucan-binding positions include 119–121 (HTN) and 129–131 (DRE). Asn146 carries N-linked (GlcNAc...) asparagine glycosylation. Xyloglucan is bound by residues 195-196 (DW) and Gly200. N-linked (GlcNAc...) asparagine glycans are attached at residues Asn206 and Asn231. Cystine bridges form between Cys225–Cys239 and Cys282–Cys296. Low complexity predominate over residues 236–253 (TSPCSPGDSTSSSSSSTS). The segment at 236–258 (TSPCSPGDSTSSSSSSTSEWFSQ) is disordered. Arg287 is a xyloglucan binding site.

Belongs to the glycosyl hydrolase 16 family. XTH group 2 subfamily. Post-translationally, contains at least one intrachain disulfide bond essential for its enzymatic activity. Predominantly expressed in green siliques.

It is found in the secreted. It localises to the cell wall. Its subcellular location is the extracellular space. The protein localises to the apoplast. The enzyme catalyses breaks a beta-(1-&gt;4) bond in the backbone of a xyloglucan and transfers the xyloglucanyl segment on to O-4 of the non-reducing terminal glucose residue of an acceptor, which can be a xyloglucan or an oligosaccharide of xyloglucan.. In terms of biological role, catalyzes xyloglucan endohydrolysis (XEH) and/or endotransglycosylation (XET). Cleaves and religates xyloglucan polymers, an essential constituent of the primary cell wall, and thereby participates in cell wall construction of growing tissues. The protein is Probable xyloglucan endotransglucosylase/hydrolase protein 21 (XTH21) of Arabidopsis thaliana (Mouse-ear cress).